Here is a 342-residue protein sequence, read N- to C-terminus: Heat-inducible transcription repressor HrcA (342 aa).

The protein belongs to the HrcA family.

Negative regulator of class I heat shock genes (grpE-dnaK-dnaJ and groELS operons). Prevents heat-shock induction of these operons. This Mesoplasma florum (strain ATCC 33453 / NBRC 100688 / NCTC 11704 / L1) (Acholeplasma florum) protein is Heat-inducible transcription repressor HrcA.